The chain runs to 46 residues: Protein PsbN (46 aa).

Residues 5-27 (TLVTLFVSGLLMSFTGYALYTAF) form a helical membrane-spanning segment.

The protein belongs to the PsbN family.

It localises to the plastid membrane. In terms of biological role, may play a role in photosystem I and II biogenesis. The protein is Protein PsbN of Cuscuta obtusiflora (Peruvian dodder).